The sequence spans 268 residues: Small ribosomal subunit protein eS1 (268 aa).

Positions 1–21 (MAVGKNKGLSKGGKKGGKKKV) are disordered.

This sequence belongs to the eukaryotic ribosomal protein eS1 family. In terms of assembly, component of the small ribosomal subunit. Mature ribosomes consist of a small (40S) and a large (60S) subunit. The 40S subunit contains about 33 different proteins and 1 molecule of RNA (18S). The 60S subunit contains about 49 different proteins and 3 molecules of RNA (28S, 5.8S and 5S).

The protein localises to the cytoplasm. Essential for oogenesis; required for late follicle cell development. This is Small ribosomal subunit protein eS1 from Drosophila willistoni (Fruit fly).